A 191-amino-acid chain; its full sequence is dCTP deaminase, dUMP-forming (191 aa).

DCTP-binding positions include 101–106 (KSSLGR), Asp119, 127–129 (TLE), Gln148, Tyr162, and Gln174. Glu129 (proton donor/acceptor) is an active-site residue.

This sequence belongs to the dCTP deaminase family. Homotrimer.

It catalyses the reaction dCTP + 2 H2O = dUMP + NH4(+) + diphosphate. Its pathway is pyrimidine metabolism; dUMP biosynthesis; dUMP from dCTP: step 1/1. Its function is as follows. Bifunctional enzyme that catalyzes both the deamination of dCTP to dUTP and the hydrolysis of dUTP to dUMP without releasing the toxic dUTP intermediate. The sequence is that of dCTP deaminase, dUMP-forming from Streptomyces coelicolor (strain ATCC BAA-471 / A3(2) / M145).